Here is a 416-residue protein sequence, read N- to C-terminus: UDP-N-acetylglucosamine 1-carboxyvinyltransferase (416 aa).

22–23 is a binding site for phosphoenolpyruvate; sequence KN. Arg91 contacts UDP-N-acetyl-alpha-D-glucosamine. Cys115 acts as the Proton donor in catalysis. Position 115 is a 2-(S-cysteinyl)pyruvic acid O-phosphothioketal (Cys115). UDP-N-acetyl-alpha-D-glucosamine contacts are provided by residues 120 to 124, Asp305, and Ile327; that span reads RPIDL.

It belongs to the EPSP synthase family. MurA subfamily.

It localises to the cytoplasm. It carries out the reaction phosphoenolpyruvate + UDP-N-acetyl-alpha-D-glucosamine = UDP-N-acetyl-3-O-(1-carboxyvinyl)-alpha-D-glucosamine + phosphate. It participates in cell wall biogenesis; peptidoglycan biosynthesis. Functionally, cell wall formation. Adds enolpyruvyl to UDP-N-acetylglucosamine. The polypeptide is UDP-N-acetylglucosamine 1-carboxyvinyltransferase (Buchnera aphidicola subsp. Acyrthosiphon pisum (strain Tuc7)).